The following is a 1395-amino-acid chain: uncharacterized protein (1395 aa).

89–96 (AYKKWGKS) is a binding site for ATP. Disordered regions lie at residues 146–166 (EEKI…LSPP) and 205–391 (SSSS…MENR). Low complexity-rich tracts occupy residues 155 to 166 (GSPSPEAELSPP) and 205 to 222 (SSSS…TSSP). Basic and acidic residues predominate over residues 230–269 (EVTKERSSEVPTTVHEKTQSKSKNEKENKFSNGTIEEKPA). Residues 287-301 (SWSSGSSEAGSSSSG) show a composition bias toward low complexity. Residues 313-328 (VKVRHKAREIRNKKGR) are compositionally biased toward basic residues. The segment covering 337–346 (KHGEKAERNI) has biased composition (basic and acidic residues). Low complexity predominate over residues 349–358 (GSSSSSSSGS). Basic and acidic residues predominate over residues 369-391 (PLKEIGRKDPGSTEGKDLYMENR). Phosphoserine is present on residues S814 and S1080. A disordered region spans residues 1110-1132 (PISASELSPGGGSESEFESEKDE). 2 positions are modified to phosphoserine: S1194 and S1338. Residues 1346-1359 (TGERDSGAKSDGFR) are compositionally biased toward basic and acidic residues. The disordered stretch occupies residues 1346–1395 (TGERDSGAKSDGFRGKMCSSASSTSEETGSEGGGEWVGPSEEELFSRTHL).

This is an uncharacterized protein from Homo sapiens (Human).